The sequence spans 225 residues: Ribonuclease 3 (225 aa).

Positions 7 to 129 (MPRLCRTLGY…IIGAVYIDSG (123 aa)) constitute an RNase III domain. Glu-42 is a binding site for Mg(2+). The active site involves Asp-46. Residues Asp-115 and Glu-118 each coordinate Mg(2+). Glu-118 is an active-site residue. One can recognise a DRBM domain in the interval 155 to 225 (DPKTLLQELL…AADALELMKR (71 aa)).

Belongs to the ribonuclease III family. In terms of assembly, homodimer. It depends on Mg(2+) as a cofactor.

The protein localises to the cytoplasm. The enzyme catalyses Endonucleolytic cleavage to 5'-phosphomonoester.. Its function is as follows. Digests double-stranded RNA. Involved in the processing of primary rRNA transcript to yield the immediate precursors to the large and small rRNAs (23S and 16S). Processes some mRNAs, and tRNAs when they are encoded in the rRNA operon. Processes pre-crRNA and tracrRNA of type II CRISPR loci if present in the organism. The chain is Ribonuclease 3 from Shewanella sediminis (strain HAW-EB3).